We begin with the raw amino-acid sequence, 249 residues long: Small ribosomal subunit protein uS2 (249 aa).

It belongs to the universal ribosomal protein uS2 family.

This chain is Small ribosomal subunit protein uS2, found in Listeria innocua serovar 6a (strain ATCC BAA-680 / CLIP 11262).